The sequence spans 235 residues: MTELARLKFYATQPHSCSYLPDEQATTLFLDPSQPMDVHVYADLSEMGFRRSGDHLYRPHCQNCNACVPARIPAVRFIPNRQQRRILKRNADLTVSAVRPVFKEEYFDLYRRYIEQRHADGDMYPPSRDQFSTFLVRDLPFCWFYEFRLEGRLMAVAVCDLLPNGLSAVYTFYEPDEERRSLGRYAILWQITEALRQNLDAVYLGYWIKNCKKMNYKTQYRPIELLINQRWVTLN.

The protein belongs to the R-transferase family. Bpt subfamily.

The protein localises to the cytoplasm. The catalysed reaction is N-terminal L-glutamyl-[protein] + L-leucyl-tRNA(Leu) = N-terminal L-leucyl-L-glutamyl-[protein] + tRNA(Leu) + H(+). The enzyme catalyses N-terminal L-aspartyl-[protein] + L-leucyl-tRNA(Leu) = N-terminal L-leucyl-L-aspartyl-[protein] + tRNA(Leu) + H(+). Functions in the N-end rule pathway of protein degradation where it conjugates Leu from its aminoacyl-tRNA to the N-termini of proteins containing an N-terminal aspartate or glutamate. The sequence is that of Aspartate/glutamate leucyltransferase from Pseudomonas entomophila (strain L48).